We begin with the raw amino-acid sequence, 430 residues long: Enolase (430 aa).

Q163 contributes to the (2R)-2-phosphoglycerate binding site. Catalysis depends on E205, which acts as the Proton donor. Mg(2+)-binding residues include D242, E285, and D312. Residues K337, R366, S367, and K388 each contribute to the (2R)-2-phosphoglycerate site. Catalysis depends on K337, which acts as the Proton acceptor.

It belongs to the enolase family. The cofactor is Mg(2+).

The protein resides in the cytoplasm. Its subcellular location is the secreted. The protein localises to the cell surface. The catalysed reaction is (2R)-2-phosphoglycerate = phosphoenolpyruvate + H2O. The protein operates within carbohydrate degradation; glycolysis; pyruvate from D-glyceraldehyde 3-phosphate: step 4/5. Catalyzes the reversible conversion of 2-phosphoglycerate (2-PG) into phosphoenolpyruvate (PEP). It is essential for the degradation of carbohydrates via glycolysis. The chain is Enolase from Maridesulfovibrio salexigens (strain ATCC 14822 / DSM 2638 / NCIMB 8403 / VKM B-1763) (Desulfovibrio salexigens).